The primary structure comprises 207 residues: Proteasome subunit beta 2 (207 aa).

Residues 1–10 (MLQLTEKFKG) constitute a propeptide, removed in mature form; by autocatalysis. Threonine 11 functions as the Nucleophile in the catalytic mechanism.

It belongs to the peptidase T1B family. The 20S proteasome core is composed of 14 alpha and 14 beta subunits that assemble into four stacked heptameric rings, resulting in a barrel-shaped structure. The two inner rings, each composed of seven catalytic beta subunits, are sandwiched by two outer rings, each composed of seven alpha subunits. The catalytic chamber with the active sites is on the inside of the barrel. Has a gated structure, the ends of the cylinder being occluded by the N-termini of the alpha-subunits. Is capped at one or both ends by the proteasome regulatory ATPase, PAN.

The protein localises to the cytoplasm. It carries out the reaction Cleavage of peptide bonds with very broad specificity.. With respect to regulation, the formation of the proteasomal ATPase PAN-20S proteasome complex, via the docking of the C-termini of PAN into the intersubunit pockets in the alpha-rings, triggers opening of the gate for substrate entry. Interconversion between the open-gate and close-gate conformations leads to a dynamic regulation of the 20S proteasome proteolysis activity. Functionally, component of the proteasome core, a large protease complex with broad specificity involved in protein degradation. This chain is Proteasome subunit beta 2, found in Pyrococcus abyssi (strain GE5 / Orsay).